A 313-amino-acid polypeptide reads, in one-letter code: Ribosomal RNA small subunit methyltransferase H (313 aa).

Residues 35–37 (GGH), aspartate 55, phenylalanine 79, aspartate 100, and glutamine 107 contribute to the S-adenosyl-L-methionine site.

Belongs to the methyltransferase superfamily. RsmH family.

The protein resides in the cytoplasm. The catalysed reaction is cytidine(1402) in 16S rRNA + S-adenosyl-L-methionine = N(4)-methylcytidine(1402) in 16S rRNA + S-adenosyl-L-homocysteine + H(+). Its function is as follows. Specifically methylates the N4 position of cytidine in position 1402 (C1402) of 16S rRNA. This Burkholderia orbicola (strain AU 1054) protein is Ribosomal RNA small subunit methyltransferase H.